Consider the following 550-residue polypeptide: Major fimbrium tip subunit FimE (550 aa).

A signal peptide spans 1 to 21; that stretch reads MKSKSIIAQLLYVLIAFMAVS. A lipid anchor (N-palmitoyl cysteine) is attached at Cys22. Cys22 carries the S-diacylglycerol cysteine lipid modification. A propeptide spanning residues 22 to 51 is cleaved from the precursor; sequence CVADKSEPCPSGEPTRVSGSIVSLEHHGLR.

It belongs to the FimE family. In terms of assembly, fimbriae are composed of a major, structural subunit and the minor components FimC, FimD and FimE. Identified in a complex composed of FimC, FimD and FimE (in vitro). Does not directly interact with host proteins, but only as a complex with FimC and FimD.

It is found in the fimbrium. The protein localises to the cell outer membrane. Its function is as follows. Probably a component of the fimbrium tip; required for incorporation of FimC and FimD into fimbriae. These long, filamentous pili are attached to the cell surface; they mediate biofilm formation, adhesion onto host cells and onto other bacteria that are part of the oral microbiome. They play an important role in invasion of periodontal tissues and are major virulence factors. FimC, FimD and FimE contribute to interaction with host CXCR4 and thereby down-regulate the TLR2-mediated host immune response. The chain is Major fimbrium tip subunit FimE from Porphyromonas gingivalis (strain ATCC 33277 / DSM 20709 / CIP 103683 / JCM 12257 / NCTC 11834 / 2561).